The sequence spans 284 residues: MVVENRLEKEKPAVGMETTVFVHGLPRKEAIELFRKAKKISEEMGFQLAVVGVLKGKIILGMNEDELTIMMNEGSEKIGTREIPIALAKGMNAATTVSATIFLCKRFGIDVVVTGGTGGVHPGGVDISQDLTEMASSRIILVSSGIKSILDVDATFEMLETLEIPVVGFMTDEFPLFFSRKSGKKVKRVENVEEILRIYRTMEELKLEKTLMVLNPVPEEHEVPREEIEHLLENIELKVEGKDVTPYLLRKLVEITGGRTLKANLSLLEENVKLAGKIALALGR.

Glutamate 17 acts as the Proton donor in catalysis. Substrate contacts are provided by lysine 77 and valine 97. A Mn(2+)-binding site is contributed by aspartate 126. A substrate-binding site is contributed by 128–130 (SQD). The active-site Nucleophile is lysine 147.

Belongs to the pseudouridine-5'-phosphate glycosidase family. As to quaternary structure, homotrimer. Mn(2+) is required as a cofactor.

The enzyme catalyses D-ribose 5-phosphate + uracil = psi-UMP + H2O. In terms of biological role, catalyzes the reversible cleavage of pseudouridine 5'-phosphate (PsiMP) to ribose 5-phosphate and uracil. Functions biologically in the cleavage direction, as part of a pseudouridine degradation pathway. This is Pseudouridine-5'-phosphate glycosidase from Thermotoga neapolitana (strain ATCC 49049 / DSM 4359 / NBRC 107923 / NS-E).